A 334-amino-acid chain; its full sequence is Protein-methionine-sulfoxide reductase catalytic subunit MsrP (334 aa).

Positions 1 to 44 (MKKNQFLKESDVTAESVFFMTRRQVLKALGISAAALSLPHAAHA) form a signal peptide, tat-type signal. Residues Asn-88, 91–92 (YE), Cys-146, Thr-181, Asn-233, Arg-238, and 249–251 (GIK) contribute to the Mo-molybdopterin site.

This sequence belongs to the MsrP family. As to quaternary structure, heterodimer of a catalytic subunit (MsrP) and a heme-binding subunit (MsrQ). Mo-molybdopterin is required as a cofactor. Predicted to be exported by the Tat system. The position of the signal peptide cleavage has not been experimentally proven.

It localises to the periplasm. The enzyme catalyses L-methionyl-[protein] + a quinone + H2O = L-methionyl-(S)-S-oxide-[protein] + a quinol. The catalysed reaction is L-methionyl-[protein] + a quinone + H2O = L-methionyl-(R)-S-oxide-[protein] + a quinol. In terms of biological role, part of the MsrPQ system that repairs oxidized periplasmic proteins containing methionine sulfoxide residues (Met-O), using respiratory chain electrons. Thus protects these proteins from oxidative-stress damage caused by reactive species of oxygen and chlorine generated by the host defense mechanisms. MsrPQ is essential for the maintenance of envelope integrity under bleach stress, rescuing a wide series of structurally unrelated periplasmic proteins from methionine oxidation, including the primary periplasmic chaperone SurA and the lipoprotein Pal. The catalytic subunit MsrP is non-stereospecific, being able to reduce both (R-) and (S-) diastereoisomers of methionine sulfoxide. This Escherichia coli (strain 55989 / EAEC) protein is Protein-methionine-sulfoxide reductase catalytic subunit MsrP.